The primary structure comprises 807 residues: Serine/threonine-protein kinase AfsK (807 aa).

The Protein kinase domain maps to 16-272 (FEVLGRLGAG…QAQLAPHLFA (257 aa)). ATP is bound by residues 22-30 (LGAGGMGLV) and lysine 44. Serine 71 is modified (phosphoserine; by autocatalysis). The active-site Proton acceptor is the aspartate 138. Threonine 168 carries the phosphothreonine; by autocatalysis modification. Disordered stretches follow at residues 292–328 (MIERRRGGRRTARRPPRPRPRRLRAAPQGPGAGHRLA) and 353–429 (AGPS…PSPA). The span at 297 to 315 (RGGRRTARRPPRPRPRRLR) shows a compositional bias: basic residues. Residues 353 to 363 (AGPSAAPDGGP) are compositionally biased toward low complexity.

Belongs to the protein kinase superfamily. Ser/Thr protein kinase family. Interacts (via the N-terminal kinase domain) with KbpA; the interaction prevents autophosphorylation of AfsK. Post-translationally, autophosphorylated mainly on threonine residues. Some phosphorylation on serine residues. Autophosphorylation on Thr-168 is the major site enhancing kinase activity towards AfsR, and is regulated though interaction with KbpA.

The catalysed reaction is L-seryl-[protein] + ATP = O-phospho-L-seryl-[protein] + ADP + H(+). It catalyses the reaction L-threonyl-[protein] + ATP = O-phospho-L-threonyl-[protein] + ADP + H(+). Component of the AfsK/AfsR system involved in the response of aerial mycelium formation to glucose. This chain is Serine/threonine-protein kinase AfsK (afsK), found in Streptomyces griseus.